Reading from the N-terminus, the 138-residue chain is Lutropin subunit beta (138 aa).

An N-terminal signal peptide occupies residues L1–A17. Disulfide bonds link C26–C74, C40–C89, C43–C127, C51–C105, C55–C107, and C110–C117. An N-linked (GlcNAc...) asparagine glycan is attached at N30.

It belongs to the glycoprotein hormones subunit beta family. In terms of assembly, heterodimer of a common alpha chain and a unique beta chain which confers biological specificity to thyrotropin, lutropin, follitropin and gonadotropin.

The protein localises to the secreted. Functionally, promotes spermatogenesis and ovulation by stimulating the testes and ovaries to synthesize steroids. The polypeptide is Lutropin subunit beta (LHB) (Canis lupus familiaris (Dog)).